We begin with the raw amino-acid sequence, 477 residues long: Succinate-semialdehyde dehydrogenase [NADP(+)] (477 aa).

Residues 142–143 (WN), 166–169 (KHSE), and 218–219 (GS) each bind NADP(+). Residue Glu-240 is the Proton acceptor of the active site. Leu-241 serves as a coordination point for NADP(+). Cys-274 functions as the Nucleophile in the catalytic mechanism. Position 371 (Glu-371) interacts with NADP(+).

The protein belongs to the aldehyde dehydrogenase family.

The enzyme catalyses succinate semialdehyde + NADP(+) + H2O = succinate + NADPH + 2 H(+). Its pathway is amino-acid degradation; 4-aminobutanoate degradation. Functionally, catalyzes the NADP(+) dependent oxidation of succinate semialdehyde to succinate. This is Succinate-semialdehyde dehydrogenase [NADP(+)] (ssdA) from Deinococcus radiodurans (strain ATCC 13939 / DSM 20539 / JCM 16871 / CCUG 27074 / LMG 4051 / NBRC 15346 / NCIMB 9279 / VKM B-1422 / R1).